A 387-amino-acid chain; its full sequence is tRNA pseudouridine synthase B (387 aa).

Aspartate 43 functions as the Nucleophile in the catalytic mechanism.

Belongs to the pseudouridine synthase TruB family. Type 1 subfamily.

It carries out the reaction uridine(55) in tRNA = pseudouridine(55) in tRNA. Responsible for synthesis of pseudouridine from uracil-55 in the psi GC loop of transfer RNAs. The polypeptide is tRNA pseudouridine synthase B (Bifidobacterium longum (strain NCC 2705)).